The sequence spans 492 residues: 5-taurinomethyluridine-[tRNA] synthase subunit GTPB3, mitochondrial (492 aa).

A mitochondrion-targeting transit peptide spans 1-20; the sequence is MWRGLWTLAAQAARGPRRLC. Positions 52, 112, and 152 each coordinate 5,10-methylenetetrahydrofolate. Residues 249 to 416 form the TrmE-type G domain; sequence GVHVVVTGPP…LLEALRKELA (168 aa). GTP contacts are provided by residues 256 to 263, 282 to 286, 303 to 306, 374 to 377, and 397 to 399; these read GPPNAGKS, GTTRD, DTAG, NKSD, and SCL. Position 259 (Asn-259) interacts with K(+). Mg(2+) is bound by residues Ser-263 and Thr-284. 5,10-methylenetetrahydrofolate is bound at residue Lys-492.

It belongs to the TRAFAC class TrmE-Era-EngA-EngB-Septin-like GTPase superfamily. TrmE GTPase family. In terms of assembly, homodimer; forms a dimer in the presence of potassium. Interacts with MTO1; forms the GTPBP3-MTO1 complex composed of homodimers of GTPBP3 and MTO1. As to quaternary structure, homodimer, forms homodimer in vivo. K(+) is required as a cofactor. As to expression, ubiquitously expressed.

The protein localises to the mitochondrion. It localises to the cytoplasm. It catalyses the reaction GTP + H2O = GDP + phosphate + H(+). In terms of biological role, GTPase component of the GTPBP3-MTO1 complex that catalyzes the 5-taurinomethyluridine (taum(5)U) modification at the 34th wobble position (U34) of mitochondrial tRNAs (mt-tRNAs), which plays a role in mt-tRNA decoding and mitochondrial translation. Taum(5)U formation on mammalian mt-tRNA requires the presence of both GTPBP3-mediated GTPase activity and MTO1 catalytic activity. The protein is 5-taurinomethyluridine-[tRNA] synthase subunit GTPB3, mitochondrial of Homo sapiens (Human).